A 445-amino-acid chain; its full sequence is Phosphoglucosamine mutase (445 aa).

Serine 102 (phosphoserine intermediate) is an active-site residue. Residues serine 102, aspartate 241, aspartate 243, and aspartate 245 each contribute to the Mg(2+) site. A Phosphoserine modification is found at serine 102.

This sequence belongs to the phosphohexose mutase family. Mg(2+) is required as a cofactor. Post-translationally, activated by phosphorylation.

It carries out the reaction alpha-D-glucosamine 1-phosphate = D-glucosamine 6-phosphate. Functionally, catalyzes the conversion of glucosamine-6-phosphate to glucosamine-1-phosphate. In Aliivibrio fischeri (strain ATCC 700601 / ES114) (Vibrio fischeri), this protein is Phosphoglucosamine mutase.